A 129-amino-acid polypeptide reads, in one-letter code: Small ribosomal subunit protein uS11 (129 aa).

The protein belongs to the universal ribosomal protein uS11 family. As to quaternary structure, part of the 30S ribosomal subunit. Interacts with proteins S7 and S18. Binds to IF-3.

Its function is as follows. Located on the platform of the 30S subunit, it bridges several disparate RNA helices of the 16S rRNA. Forms part of the Shine-Dalgarno cleft in the 70S ribosome. The polypeptide is Small ribosomal subunit protein uS11 (Allorhizobium ampelinum (strain ATCC BAA-846 / DSM 112012 / S4) (Agrobacterium vitis (strain S4))).